The primary structure comprises 384 residues: Involucrin (384 aa).

The disordered stretch occupies residues 1–384 (MSQQHTLPVT…LPEQPQEPEV (384 aa)). 2 stretches are compositionally biased toward basic and acidic residues: residues 56–65 (PSKHEEKGTD) and 80–134 (PELH…ELHL). Positions 137-146 (QQQQESQEQE) are enriched in low complexity. Basic and acidic residues predominate over residues 179–208 (KQREPQESQEQRLHLGKEQESQEQRLHLGE). Low complexity predominate over residues 239–267 (PEQRLQLLPQGPQEQELHLGKQQQQQESQ). Composition is skewed to basic and acidic residues over residues 268–308 (QHQE…KKLL) and 315–336 (EAVK…KEQL).

The protein belongs to the involucrin family. As to quaternary structure, directly or indirectly cross-linked to cornifelin (CNFN). Post-translationally, substrate of transglutaminase. Specific glutamines or lysines are cross-linked to keratins, desmoplakin and to inter involucrin molecules. In terms of tissue distribution, keratinocytes of epidermis and other stratified squamous epithelia.

The protein resides in the cytoplasm. Functionally, part of the insoluble cornified cell envelope (CE) of stratified squamous epithelia. This chain is Involucrin (IVL), found in Otolemur crassicaudatus (Brown greater galago).